The primary structure comprises 152 residues: Lipoprotein signal peptidase (152 aa).

Helical transmembrane passes span 55 to 75 (NKMW…VFYM) and 85 to 105 (LGIS…DRVF). Active-site residues include aspartate 111 and aspartate 129. Residues 124 to 144 (VFNIADSALCIGVVLIIIQTL) form a helical membrane-spanning segment.

It belongs to the peptidase A8 family.

It localises to the cell membrane. The catalysed reaction is Release of signal peptides from bacterial membrane prolipoproteins. Hydrolyzes -Xaa-Yaa-Zaa-|-(S,diacylglyceryl)Cys-, in which Xaa is hydrophobic (preferably Leu), and Yaa (Ala or Ser) and Zaa (Gly or Ala) have small, neutral side chains.. Its pathway is protein modification; lipoprotein biosynthesis (signal peptide cleavage). Its function is as follows. This protein specifically catalyzes the removal of signal peptides from prolipoproteins. The protein is Lipoprotein signal peptidase of Bacillus cereus (strain ZK / E33L).